Consider the following 73-residue polypeptide: DNA-directed RNA polymerase subunit omega (73 aa).

The protein belongs to the RNA polymerase subunit omega family. The RNAP catalytic core consists of 2 alpha, 1 beta, 1 beta' and 1 omega subunit. When a sigma factor is associated with the core the holoenzyme is formed, which can initiate transcription.

The catalysed reaction is RNA(n) + a ribonucleoside 5'-triphosphate = RNA(n+1) + diphosphate. Its function is as follows. Promotes RNA polymerase assembly. Latches the N- and C-terminal regions of the beta' subunit thereby facilitating its interaction with the beta and alpha subunits. The protein is DNA-directed RNA polymerase subunit omega of Lactobacillus delbrueckii subsp. bulgaricus (strain ATCC BAA-365 / Lb-18).